The primary structure comprises 197 residues: Inner membrane-spanning protein YciB (197 aa).

Helical transmembrane passes span 36–56 (IYSA…ALFL), 64–84 (GQWL…TFHS), 90–110 (WKAP…HFIG), 135–155 (LAWI…AFTF), and 162–182 (FKVF…GVYL).

Belongs to the YciB family.

It is found in the cell inner membrane. In terms of biological role, plays a role in cell envelope biogenesis, maintenance of cell envelope integrity and membrane homeostasis. This is Inner membrane-spanning protein YciB from Pseudomonas putida (strain ATCC 700007 / DSM 6899 / JCM 31910 / BCRC 17059 / LMG 24140 / F1).